The following is a 377-amino-acid chain: Serine protease grass (377 aa).

The N-terminal stretch at 1-26 is a signal peptide; that stretch reads MMIASSLAVLYGIAIVSSMGVQSARA. Residues 31–89 enclose the Clip domain; the sequence is DCTTPDGDQGQCMPFSSCRTIEERLTEAQKAGQKVPADYASYLQKALCGEFNGVRHFCC. Disulfide bonds link C32/C88, C42/C78, C48/C89, C111/C243, C148/C164, and C188/C197. The segment at 91 to 118 is linker; that stretch reads SANIQHNSKVMSLFKDENFDCGNFLSQR. One can recognise a Peptidase S1 domain in the interval 119–373; that stretch reads VSNGYEVKLS…YVQWITDTMA (255 aa). H163 functions as the Charge relay system in the catalytic mechanism. Residues E179, R181, T184, and D187 each contribute to the Ca(2+) site. Residue D223 is the Charge relay system of the active site. N230 and N270 each carry an N-linked (GlcNAc...) asparagine glycan. 2 cysteine pairs are disulfide-bonded: C290–C304 and C314–C349. The Charge relay system role is filled by S318.

The protein belongs to the peptidase S1 family. CLIP subfamily. Proteolytically cleaved by a tryspin-like protease which is likely to activate grass.

It is found in the secreted. Functionally, endopeptidase. Plays a key role in innate immunity by activating the Toll pathway in response to fungal and Gram-positive bacterial infections, presumably downstream of pattern-recognition receptors (PRR), such as PGRP-SA, GNBP1 and GNBP3, and upstream of spz processing enzyme SPE. The sequence is that of Serine protease grass from Drosophila melanogaster (Fruit fly).